The chain runs to 309 residues: Transcription elongation factor S-II (309 aa).

In terms of domain architecture, TFIIS N-terminal spans 5–79 (EVLVHVKNLE…SSWKDAINKN (75 aa)). Residues 78–142 (KNKRSRQAQQ…NSKNDGVDTA (65 aa)) form a disordered region. A compositionally biased stretch (basic and acidic residues) spans 88 to 102 (HHQDHAPGNAEDKTT). Over residues 103–120 (VGESVNGVQQPASSQSDA) the composition is skewed to polar residues. Position 116 is a phosphoserine (S116). In terms of domain architecture, TFIIS central spans 148–264 (LRDQVLKALY…NAQGATIERS (117 aa)). Residues 267-307 (DRFTCGKCKEKKVSYYQLQTRSADEPLTTFCTCEACGNRWK) form a TFIIS-type zinc finger. 4 residues coordinate Zn(2+): C271, C274, C299, and C302.

The protein belongs to the TFS-II family.

It is found in the nucleus. Its function is as follows. Necessary for efficient RNA polymerase II transcription elongation past template-encoded arresting sites. The arresting sites in DNA have the property of trapping a certain fraction of elongating RNA polymerases that pass through, resulting in locked ternary complexes. Cleavage of the nascent transcript by S-II allows the resumption of elongation from the new 3'-terminus. In terms of biological role, can promote the transfer of one strand of a double-stranded DNA molecule to a homologous single strand and thus may be involved in recombination. The chain is Transcription elongation factor S-II (DST1) from Saccharomyces cerevisiae (strain ATCC 204508 / S288c) (Baker's yeast).